Here is a 210-residue protein sequence, read N- to C-terminus: Chloramphenicol acetyltransferase (210 aa).

H79 is a catalytic residue.

This sequence belongs to the transferase hexapeptide repeat family.

The enzyme catalyses chloramphenicol + acetyl-CoA = chloramphenicol 3-acetate + CoA. In terms of biological role, this enzyme is an effector of chloramphenicol resistance in bacteria. This Klebsiella aerogenes (Enterobacter aerogenes) protein is Chloramphenicol acetyltransferase (catB4).